Reading from the N-terminus, the 51-residue chain is MAAKKSFIIKQKLAKAKNQNRPLPQWFRLKTNNTIRYNAKRRHWRRTKLVC.

The protein belongs to the eukaryotic ribosomal protein eL39 family. Interacts with YIH1.

The chain is Large ribosomal subunit protein eL39 (RPL39) from Kluyveromyces marxianus (Yeast).